A 296-amino-acid polypeptide reads, in one-letter code: Protoheme IX farnesyltransferase (296 aa).

9 helical membrane passes run 9–29, 36–56, 84–104, 108–128, 133–153, 163–183, 209–229, 234–254, and 265–285; these read VTKPGIIFGNLISVIGGFLLA, YPLFIYTLVGVSLVVASGCVF, AVSLVYATLLGIAGFMLLWFG, LACWLGVMGFVVYVGIYSLYM, VYGTLIGSLSGAAPPVIGYCA, LILLAIFSLWQMPHSYAIAIF, ITLYIIAFAVATLMLSLGGYA, LVVAAAVSVWWLGMALRGYKV, and FGFSIIAITALSVMMSVDFMV.

The protein belongs to the UbiA prenyltransferase family. Protoheme IX farnesyltransferase subfamily.

The protein resides in the cell inner membrane. The enzyme catalyses heme b + (2E,6E)-farnesyl diphosphate + H2O = Fe(II)-heme o + diphosphate. It participates in porphyrin-containing compound metabolism; heme O biosynthesis; heme O from protoheme: step 1/1. Functionally, converts heme B (protoheme IX) to heme O by substitution of the vinyl group on carbon 2 of heme B porphyrin ring with a hydroxyethyl farnesyl side group. This chain is Protoheme IX farnesyltransferase, found in Citrobacter koseri (strain ATCC BAA-895 / CDC 4225-83 / SGSC4696).